We begin with the raw amino-acid sequence, 3342 residues long: Large tegument protein deneddylase (3342 aa).

Residues 1–302 (MTDSTDSRQA…SRIYGTSDIV (302 aa)) form a deubiquitination activity region. The 221-residue stretch at 78–298 (VAVGIRNQFA…ISTVSRIYGT (221 aa)) folds into the Peptidase C76 domain. Active-site residues include Cys98, Asp232, and His234. The disordered stretch occupies residues 472–554 (RRPLWTPQSS…SPTTSNRGED (83 aa)). A compositionally biased stretch (low complexity) spans 480 to 494 (SSSENISLDGSSSSL). A compositionally biased stretch (polar residues) spans 514–526 (VTSTESSDVTENV). The tract at residues 630–656 (LYVCMMDIFARLFNYIIENGARTTSDR) is interaction with inner tegument protein. Disordered stretches follow at residues 2584–2603 (DGDADISSNRIDSEDDTYAD), 2654–2987 (PQIG…SRKH), and 3196–3279 (PKHD…SSTS). Pro residues-rich tracts occupy residues 2701–2743 (TPAP…PKPK), 2751–2777 (KPSPAPKPSPASKPTPAPKPSPAPKPK), 2785–2799 (KPTPAPKPSPASKPK), 2823–2837 (KPSPAPKPSPAPKPK), and 2845–2897 (KPTP…PKPK). A compositionally biased stretch (polar residues) spans 2911–2947 (NSDSKTSPVPNPNTFSASKIPPTSSIAEETKPCQSNL). Over residues 3264 to 3279 (HVSGSTDTTTDGSSTS) the composition is skewed to low complexity.

This sequence belongs to the herpesviridae large tegument protein family. In terms of assembly, interacts with host CUL1 and CUL4A; these interactions inhibit the E3 ligase activity of cullins. Interacts with inner tegument protein. Interacts with capsid vertex specific component CVC2. Interacts with the major capsid protein/MCP.

Its subcellular location is the virion tegument. It is found in the host cytoplasm. It localises to the host nucleus. The catalysed reaction is Thiol-dependent hydrolysis of ester, thioester, amide, peptide and isopeptide bonds formed by the C-terminal Gly of ubiquitin (a 76-residue protein attached to proteins as an intracellular targeting signal).. Large tegument protein that plays multiple roles in the viral cycle. During viral entry, remains associated with the capsid while most of the tegument is detached and participates in the capsid transport toward the host nucleus. Plays a role in the routing of the capsid at the nuclear pore complex and subsequent uncoating. Within the host nucleus, acts as a deneddylase and promotes the degradation of nuclear CRLs (cullin-RING ubiquitin ligases) and thereby stabilizes nuclear CRL substrates, while cytoplasmic CRLs remain unaffected. These modifications prevent host cell cycle S-phase progression and create a favorable environment allowing efficient viral genome replication. Participates later in the secondary envelopment of capsids. Indeed, plays a linker role for the association of the outer viral tegument to the capsids together with the inner tegument protein. The sequence is that of Large tegument protein deneddylase (MDV049) from Gallus gallus (Chicken).